The primary structure comprises 726 residues: Sister chromatid cohesion protein SCC4 (726 aa).

7 TPR repeats span residues 7-40 (AEGL…QISF), 88-121 (FQNY…ASSV), 132-165 (CNFN…ASHI), 229-262 (RLRL…IQQL), 443-477 (PTIL…CIEA), 531-564 (ASIL…AHNH), and 572-605 (AQYL…AKKL). Positions 697–726 (SVGIEGPSPAPSSSRLVGLDTGKRWGKRRM) are disordered.

The protein belongs to the SCC4/mau-2 family. Interacts with SCC2 to form the cohesin loading complex. As to expression, expressed ubiquitously.

Its subcellular location is the nucleus. The protein localises to the cytoplasm. In terms of biological role, essential protein required for cell fate determination during embryogenesis. Involved in sister chromatid cohesion. Forms a complex with SCC2, which is required for the association of the cohesin complex with chromosomes. This Arabidopsis thaliana (Mouse-ear cress) protein is Sister chromatid cohesion protein SCC4.